The following is a 156-amino-acid chain: 6,7-dimethyl-8-ribityllumazine synthase (156 aa).

5-amino-6-(D-ribitylamino)uracil is bound by residues phenylalanine 23, 57–59, and 81–83; these read AFE and AVI. 86-87 provides a ligand contact to (2S)-2-hydroxy-3-oxobutyl phosphate; it reads ST. The Proton donor role is filled by histidine 89. Phenylalanine 114 lines the 5-amino-6-(D-ribitylamino)uracil pocket. Arginine 128 contacts (2S)-2-hydroxy-3-oxobutyl phosphate.

Belongs to the DMRL synthase family.

The enzyme catalyses (2S)-2-hydroxy-3-oxobutyl phosphate + 5-amino-6-(D-ribitylamino)uracil = 6,7-dimethyl-8-(1-D-ribityl)lumazine + phosphate + 2 H2O + H(+). The protein operates within cofactor biosynthesis; riboflavin biosynthesis; riboflavin from 2-hydroxy-3-oxobutyl phosphate and 5-amino-6-(D-ribitylamino)uracil: step 1/2. In terms of biological role, catalyzes the formation of 6,7-dimethyl-8-ribityllumazine by condensation of 5-amino-6-(D-ribitylamino)uracil with 3,4-dihydroxy-2-butanone 4-phosphate. This is the penultimate step in the biosynthesis of riboflavin. This Campylobacter curvus (strain 525.92) protein is 6,7-dimethyl-8-ribityllumazine synthase.